The primary structure comprises 204 residues: Probable nicotinate-nucleotide adenylyltransferase (204 aa).

Belongs to the NadD family.

It catalyses the reaction nicotinate beta-D-ribonucleotide + ATP + H(+) = deamido-NAD(+) + diphosphate. The protein operates within cofactor biosynthesis; NAD(+) biosynthesis; deamido-NAD(+) from nicotinate D-ribonucleotide: step 1/1. In terms of biological role, catalyzes the reversible adenylation of nicotinate mononucleotide (NaMN) to nicotinic acid adenine dinucleotide (NaAD). The sequence is that of Probable nicotinate-nucleotide adenylyltransferase from Dehalococcoides mccartyi (strain CBDB1).